A 243-amino-acid polypeptide reads, in one-letter code: High affinity immunoglobulin epsilon receptor subunit beta (243 aa).

A disordered region spans residues 1 to 48; sequence MDTENKSRADLALPNPQESPSAPDIELLEASPPAKALPEKPASPPPQQ. The Cytoplasmic segment spans residues 1-59; sequence MDTENKSRADLALPNPQESPSAPDIELLEASPPAKALPEKPASPPPQQTWQSFLKKELE. Residues 60–79 form a helical membrane-spanning segment; the sequence is FLGVTQVLVGLICLCFGTVV. Over 80 to 97 the chain is Extracellular; that stretch reads CSTLQTSDFDDEVLLLYR. A helical membrane pass occupies residues 98-117; the sequence is AGYPFWGAVLFVLSGFLSIM. Over 118 to 130 the chain is Cytoplasmic; the sequence is SERKNTLYLVRGS. A helical membrane pass occupies residues 131–150; that stretch reads LGANIVSSIAAGLGIAILIL. At 151-179 the chain is on the extracellular side; it reads NLSNNSAYMNYCKDITEDDGCFVTSFITE. Residues 180–199 form a helical membrane-spanning segment; sequence LVLMLLFLTILAFCSAVLLI. At 200–243 the chain is on the cytoplasmic side; it reads IYRIGQEFERSKVPDDRLYEELHVYSPIYSALEDTREASAPVVS. Phosphotyrosine is present on residues Y218 and Y224. S225 is modified (phosphoserine). At Y228 the chain carries Phosphotyrosine.

Belongs to the MS4A family. In terms of assembly, tetramer of an alpha chain, a beta chain, and two disulfide linked gamma chains. Binds LILRB1. Interacts with FES/FPS and LYN. Interacts with FGR. Phosphorylated on tyrosine residues by LYN.

It localises to the membrane. Its function is as follows. High affinity receptor that binds to the Fc region of immunoglobulins epsilon. Aggregation of FCER1 by multivalent antigens is required for the full mast cell response, including the release of preformed mediators (such as histamine) by degranulation and de novo production of lipid mediators and cytokines. Also mediates the secretion of important lymphokines. Binding of allergen to receptor-bound IgE leads to cell activation and the release of mediators responsible for the manifestations of allergy. This chain is High affinity immunoglobulin epsilon receptor subunit beta (Ms4a2), found in Rattus norvegicus (Rat).